A 447-amino-acid chain; its full sequence is MSVFGFDNIPTWLWWLLAIYLATPFVLYVVQPYLFYEGKSTKTRILIVVLGDLGHSPRILYHARSFSKAGFQVELSGYVDSDIPTDILDDDNIEIHGLKKYGSEKGLLVKALKQGLQLCSMFWKLRAVDYILLQNPPTIPILPIAVVVKTFSRAKLIIDWHNLGYTILQMKFKDQFLHPLVLLAYLIEWIFAKFANYHLTVTKAMKTYLVEKFGIDGKKIAVLYDRPGKQFSPLKEADDREALLKQEFIAKYIPKEFDISKDKIFVTSTSFTPDEDISVLIGSFKIYENSFQKFDQTLPRILCFITGKGPLQEKIVKQVQDFKWDRVQVEFLWLSSEDYPKLLRLCDYGVSLHTSSSGLDLPMKILDMFGSGLPVICMNYPVLDELVQQNVNGLKFADRRELHEALIFSVKDEQVHQEIKRGALRESKNRWNESWESALSELKIIHK.

Over 1–8 (MSVFGFDN) the chain is Lumenal. The chain crosses the membrane as a helical span at residues 9–29 (IPTWLWWLLAIYLATPFVLYV). Over 30–127 (VQPYLFYEGK…LCSMFWKLRA (98 aa)) the chain is Cytoplasmic. Residues 128-148 (VDYILLQNPPTIPILPIAVVV) constitute an intramembrane region (helical). At 149 to 447 (KTFSRAKLII…ALSELKIIHK (299 aa)) the chain is on the lumenal side.

It belongs to the glycosyltransferase group 1 family.

It localises to the endoplasmic reticulum membrane. It catalyses the reaction an N,N'-diacetylchitobiosyl-diphospho-di-trans,poly-cis-dolichol + GDP-alpha-D-mannose = a beta-D-Man-(1-&gt;4)-beta-D-GlcNAc-(1-&gt;4)-alpha-D-GlcNAc-diphospho-di-trans,poly-cis-dolichol + GDP + H(+). It participates in protein modification; protein glycosylation. In terms of biological role, participates in the formation of the lipid-linked precursor oligosaccharide for N-glycosylation. Involved in assembling the dolichol-pyrophosphate-GlcNAc(2)-Man(5) intermediate on the cytoplasmic surface of the ER. The sequence is that of Chitobiosyldiphosphodolichol beta-mannosyltransferase (ALG1) from Kluyveromyces lactis (strain ATCC 8585 / CBS 2359 / DSM 70799 / NBRC 1267 / NRRL Y-1140 / WM37) (Yeast).